Reading from the N-terminus, the 237-residue chain is Probable S-methyl-5'-thioinosine phosphorylase (237 aa).

Phosphate-binding positions include Thr12 and 54–55 (RH). Met187 provides a ligand contact to substrate. Position 188 (Thr188) interacts with phosphate. 211–213 (NWA) is a binding site for substrate.

This sequence belongs to the PNP/MTAP phosphorylase family. MTAP subfamily. As to quaternary structure, homotrimer.

The catalysed reaction is S-methyl-5'-thioinosine + phosphate = 5-(methylsulfanyl)-alpha-D-ribose 1-phosphate + hypoxanthine. It functions in the pathway purine metabolism; purine nucleoside salvage. In terms of biological role, catalyzes the reversible phosphorylation of S-methyl-5'-thioinosine (MTI) to hypoxanthine and 5-methylthioribose-1-phosphate. Involved in the breakdown of S-methyl-5'-thioadenosine (MTA), a major by-product of polyamine biosynthesis. Catabolism of (MTA) occurs via deamination to MTI and phosphorolysis to hypoxanthine. This chain is Probable S-methyl-5'-thioinosine phosphorylase, found in Xylella fastidiosa (strain 9a5c).